The following is a 361-amino-acid chain: T-box-containing protein TBX6L (361 aa).

Positions 36–209 (LWMKFHQIGT…NNPFAKGFRE (174 aa)) form a DNA-binding region, T-box. 2 disordered regions span residues 203 to 259 (FAKG…VKEE) and 280 to 323 (HAFP…QLPS). Basic and acidic residues-rich tracts occupy residues 206 to 220 (GFRE…EGRA) and 234 to 259 (KLPE…VKEE). Positions 280–290 (HAFPAASPAPA) are enriched in low complexity.

It localises to the nucleus. Its function is as follows. May be involved in regulating somitogenesis. In Gallus gallus (Chicken), this protein is T-box-containing protein TBX6L (TBX6L).